The sequence spans 590 residues: Pescadillo homolog (590 aa).

A disordered region spans residues 297–318; the sequence is AKADAGEEEEVEEEEEVEDDGL. Positions 302–318 are enriched in acidic residues; it reads GEEEEVEEEEEVEDDGL. Residues 337–446 enclose the BRCT domain; the sequence is TAGQLFSNFT…KLLPVSEYAP (110 aa). The disordered stretch occupies residues 452-590; it reads AHLSPWGDAG…RKLNEKKEKR (139 aa). Over residues 471 to 499 the composition is skewed to acidic residues; that stretch reads DASDDDEDDEDIEVAPEDYDKDDEEEEAE. A coiled-coil region spans residues 489 to 589; it reads YDKDDEEEEA…RRKLNEKKEK (101 aa). Composition is skewed to basic and acidic residues over residues 500-517, 532-547, and 567-577; these read AEAK…KGTK, DKMT…DKKL, and NDKKSDREAEL.

This sequence belongs to the pescadillo family. As to quaternary structure, component of the NOP7 complex, composed of ERB1, NOP7 and YTM1. The complex is held together by ERB1, which interacts with NOP7 via its N-terminal domain and with YTM1 via a high-affinity interaction between the seven-bladed beta-propeller domains of the 2 proteins. The NOP7 complex associates with the 66S pre-ribosome.

It localises to the nucleus. The protein resides in the nucleolus. It is found in the nucleoplasm. Functionally, component of the NOP7 complex, which is required for maturation of the 25S and 5.8S ribosomal RNAs and formation of the 60S ribosome. The polypeptide is Pescadillo homolog (Yarrowia lipolytica (strain CLIB 122 / E 150) (Yeast)).